Here is a 395-residue protein sequence, read N- to C-terminus: Transcription termination/antitermination protein NusA (395 aa).

In terms of domain architecture, S1 motif spans 137–201; it reads NSVLMGQVIL…TKKGLLLELS (65 aa). KH domains lie at 243-291 and 331-378; these read SHNS…TLAL and KVRL…NENE.

This sequence belongs to the NusA family. Monomer. Binds directly to the core enzyme of the DNA-dependent RNA polymerase and to nascent RNA.

Its subcellular location is the cytoplasm. Its function is as follows. Participates in both transcription termination and antitermination. This Helicobacter pylori (strain J99 / ATCC 700824) (Campylobacter pylori J99) protein is Transcription termination/antitermination protein NusA.